The sequence spans 203 residues: Ribonuclease HII (203 aa).

An RNase H type-2 domain is found at 14-203; it reads GVIAGVDEVG…ILNSTKRALL (190 aa). A divalent metal cation contacts are provided by aspartate 20, glutamate 21, and aspartate 112.

Belongs to the RNase HII family. Mn(2+) serves as cofactor. It depends on Mg(2+) as a cofactor.

Its subcellular location is the cytoplasm. It catalyses the reaction Endonucleolytic cleavage to 5'-phosphomonoester.. In terms of biological role, endonuclease that specifically degrades the RNA of RNA-DNA hybrids. This is Ribonuclease HII from Wolbachia sp. subsp. Brugia malayi (strain TRS).